Consider the following 560-residue polypeptide: uncharacterized protein (560 aa).

Helical transmembrane passes span 9 to 29 (LVIT…SFLL), 61 to 81 (ILVP…KYKI), 136 to 156 (IGIA…ASMM), 305 to 325 (SLQI…ASFI), and 442 to 462 (VVLE…TNFY).

The protein localises to the membrane. This is an uncharacterized protein from Saccharomyces cerevisiae (strain ATCC 204508 / S288c) (Baker's yeast).